The sequence spans 20 residues: Cytolysin tenebrosin-A (20 aa).

The plays an important role in the hemolytic activity stretch occupies residues 3–12; sequence AVAGAVIEGA. The segment at 11–20 is N-terminal region; the sequence is GATLTFEVLQ.

The protein belongs to the actinoporin family. Sea anemone subfamily. In terms of assembly, octamer or nonamer in membranes. Monomer in the soluble state.

Its subcellular location is the secreted. The protein resides in the nematocyst. The protein localises to the target cell membrane. In terms of biological role, pore-forming protein that forms cations-selective hydrophilic pores of around 1 nm and causes cardiac stimulation and cytolysis. Pore formation is a multi-step process that involves specific recognition of membrane sphingomyelin (but neither cholesterol nor phosphatidylcholine) using aromatic rich region and adjacent phosphocholine (POC) binding site, firm binding to the membrane (mainly driven by hydrophobic interactions) accompanied by the transfer of the N-terminal region to the lipid-water interface and finally pore formation after oligomerization of monomers. This is Cytolysin tenebrosin-A from Actinia tenebrosa (Australian red waratah sea anemone).